Consider the following 338-residue polypeptide: 1-aminocyclopropane-1-carboxylate deaminase (338 aa).

N6-(pyridoxal phosphate)lysine is present on Lys-51. Ser-78 (nucleophile) is an active-site residue.

Belongs to the ACC deaminase/D-cysteine desulfhydrase family. As to quaternary structure, homotrimer. The cofactor is pyridoxal 5'-phosphate.

The catalysed reaction is 1-aminocyclopropane-1-carboxylate + H2O = 2-oxobutanoate + NH4(+). Catalyzes a cyclopropane ring-opening reaction, the irreversible conversion of 1-aminocyclopropane-1-carboxylate (ACC) to ammonia and alpha-ketobutyrate. Allows growth on ACC as a nitrogen source. This chain is 1-aminocyclopropane-1-carboxylate deaminase, found in Burkholderia ambifaria (strain ATCC BAA-244 / DSM 16087 / CCUG 44356 / LMG 19182 / AMMD) (Burkholderia cepacia (strain AMMD)).